The chain runs to 122 residues: Large ribosomal subunit protein uL14 (122 aa).

This sequence belongs to the universal ribosomal protein uL14 family. Part of the 50S ribosomal subunit. Forms a cluster with proteins L3 and L19. In the 70S ribosome, L14 and L19 interact and together make contacts with the 16S rRNA in bridges B5 and B8.

Its function is as follows. Binds to 23S rRNA. Forms part of two intersubunit bridges in the 70S ribosome. This chain is Large ribosomal subunit protein uL14, found in Bartonella bacilliformis (strain ATCC 35685 / KC583 / Herrer 020/F12,63).